A 360-amino-acid chain; its full sequence is 3-dehydroquinate synthase (360 aa).

NAD(+) contacts are provided by residues 71 to 76 (DGEAHK), 105 to 109 (GVVGD), 129 to 130 (TT), Lys142, and Lys151. Glu184, His247, and His264 together coordinate Zn(2+).

This sequence belongs to the sugar phosphate cyclases superfamily. Dehydroquinate synthase family. Co(2+) serves as cofactor. It depends on Zn(2+) as a cofactor. The cofactor is NAD(+).

The protein localises to the cytoplasm. It catalyses the reaction 7-phospho-2-dehydro-3-deoxy-D-arabino-heptonate = 3-dehydroquinate + phosphate. The protein operates within metabolic intermediate biosynthesis; chorismate biosynthesis; chorismate from D-erythrose 4-phosphate and phosphoenolpyruvate: step 2/7. Its function is as follows. Catalyzes the conversion of 3-deoxy-D-arabino-heptulosonate 7-phosphate (DAHP) to dehydroquinate (DHQ). This chain is 3-dehydroquinate synthase, found in Azoarcus sp. (strain BH72).